A 380-amino-acid chain; its full sequence is Phthiodiolone/phenolphthiodiolone dimycocerosates ketoreductase (380 aa).

This sequence belongs to the mer family. Phthiodiolone/phenolphthiodiolone dimycocerosates ketoreductase subfamily.

Its function is as follows. Catalyzes the reduction of the keto moiety of phthiodiolone dimycocerosates (DIM B) and glycosylated phenolphthiodiolone dimycocerosates to form the intermediate compounds phthiotriol and glycosylated phenolphthiotriol dimycocerosates during phthiocerol dimycocerosates (DIM A) and glycosylated phenolphthiocerol dimycocerosates (PGL) biosynthesis. The protein is Phthiodiolone/phenolphthiodiolone dimycocerosates ketoreductase of Mycobacterium sp. (strain JLS).